A 586-amino-acid polypeptide reads, in one-letter code: MKKGSKLILILLVTFFACLLIFPTLKWYFLMSVEDKKISSYSQEALRDYSKKKALNDLVKLKELYNKDPNSSIPASLSYLIPIAKNNYRSSMKIPPNIFTAKTLREGFLTDSDMGEVSLEIYRYYENIKKGKSRIIHLGLDLSGGMSVTISLDYSSVEKKLGRSLTFAEREDAIYRIMQILKDRVBRFGLTEPKIVREAGGNKIFLDIPGEKDESRVSTLLSGKGNLTFYVVDDESTSLLHRKILEAGSLFSIPEIQASMNLPDSKQIFPWYVKDSYGVDDESSVRYYVVDASPENSFDGAHIKDAGVSNDPRTGRDTVAFSLDVDGSEKFFKFTQKNVGKSLAVVMEGKIKSVAGIGYAITGGNVSIQGDSFDKKEAQDLALVFKTAAFPVDIKIDDLRIIGPTLGARTIDLGIKASALALCLVFLFICVYYGLSGVVAGFSLVIYNVFLILAILSAFNFTLTLTSIAGLILTMGMAVDINIVIYERIKEEIREGRRFENAFEAGFKKAFLSIMDANITTFIAVLFLTLLGTGVIQGFAWSLSVGIVASLFSSLIFSRFILEFIISVRKSKFISISWSSKYAKSN.

6 helical membrane passes run 7 to 27 (LILI…TLKW), 418 to 438 (SALA…LSGV), 439 to 459 (VAGF…LSAF), 465 to 485 (LTSI…NIVI), 521 to 541 (TFIA…GFAW), and 546 to 566 (GIVA…EFII).

This sequence belongs to the SecD/SecF family. SecD subfamily. In terms of assembly, forms a complex with SecF. Part of the essential Sec protein translocation apparatus which comprises SecA, SecYEG and auxiliary proteins SecDF. Other proteins may also be involved.

The protein localises to the cell inner membrane. Its function is as follows. Part of the Sec protein translocase complex. Interacts with the SecYEG preprotein conducting channel. SecDF uses the proton motive force (PMF) to complete protein translocation after the ATP-dependent function of SecA. In Borreliella burgdorferi (strain ATCC 35210 / DSM 4680 / CIP 102532 / B31) (Borrelia burgdorferi), this protein is Protein translocase subunit SecD.